The primary structure comprises 748 residues: Antigen peptide transporter 1 (748 aa).

Residues 1-15 (MASSRCPAPRGCRCL) lie on the Cytoplasmic side of the membrane. A helical membrane pass occupies residues 16–36 (PGASLAWLGTVLLFLADWVLL). The Lumenal segment spans residues 37 to 53 (RTALPRIFSLLVPTALP). The chain crosses the membrane as a helical span at residues 54-76 (LLRVWAVGLSRWAVLWLGACGVL). At 77 to 92 (RATVGSKSENAGAQGW) the chain is on the cytoplasmic side. The helical transmembrane segment at 93 to 113 (LAALEPLAAALGLALPGLALF) threads the bilayer. Over 114 to 133 (RELISWGAPGSADSTRLLHW) the chain is Lumenal. Residues 134–154 (GSHPSAFVVSYAAALPAAALW) form a helical membrane-spanning segment. Residues 155-186 (HKLGSLWVPGGQGGSGNPVRRLLGCLGSETRR) are Cytoplasmic-facing. The helical transmembrane segment at 187-207 (LSLFLVLVVLSSLGEMAIPFF) threads the bilayer. The ABC transmembrane type-1 domain maps to 187–470 (LSLFLVLVVL…LLSIYPRVQK (284 aa)). Residues 208–227 (TGRLTDWILQDGSADTFTRN) lie on the Lumenal side of the membrane. A helical transmembrane segment spans residues 228-248 (LTLMSILTIASAVLEFVGDGI). The Cytoplasmic segment spans residues 249 to 298 (YNNTMGHVHSHLQGEVFGAVLRQETEFFQQNQTGNITSRVTEDTSTLSDS). A helical membrane pass occupies residues 299 to 319 (LSENLSLFLWYLVRGLCLLGI). Residues 320 to 328 (MLWGSVSLT) are Lumenal-facing. A helical membrane pass occupies residues 329–349 (MVTLVTLPLLFLLPKKVGKWY). The Cytoplasmic segment spans residues 350-418 (QLLEVQVRES…AVNSWTTSIS (69 aa)). Positions 375–420 (PTVRSFANEEGEAQKFREKLQEIKTLNQKEAVAYAVNSWTTSISGM) are part of the peptide-binding site. A helical transmembrane segment spans residues 419-439 (GMLLKVGILYIGGQLVTSGAV). Topologically, residues 440-443 (SSGN) are lumenal. The chain crosses the membrane as a helical span at residues 444-464 (LVTFVLYQMQFTQAVEVLLSI). A part of the peptide-binding site region spans residues 453–487 (QFTQAVEVLLSIYPRVQKAVGSSEKIFEYLDRTPR). The Cytoplasmic segment spans residues 465 to 748 (YPRVQKAVGS…MVQAPADAPE (284 aa)). Residues 503–742 (VQFQDVSFAY…KGCYWAMVQA (240 aa)) form the ABC transporter domain. ATP is bound by residues 538-546 (GPNGSGKST), 641-647 (SQLSGGQ), and Gln-701. Ser-545 is a binding site for Mg(2+).

It belongs to the ABC transporter superfamily. ABCB family. MHC peptide exporter (TC 3.A.1.209) subfamily. Heterodimer of TAP1 and TAP2 (TAP1-TAP2). A component of the peptide loading complex (PLC), interacts via TAPBP with MHCI heterodimer; this interaction mediates peptide-MHCI assembly. Interacts with PSMB5 and PSMB8. The cofactor is Mg(2+).

It localises to the endoplasmic reticulum membrane. It carries out the reaction a peptide antigen(in) + ATP + H2O = a peptide antigen(out) + ADP + phosphate + H(+). In terms of biological role, ABC transporter associated with antigen processing. In complex with TAP2 mediates unidirectional translocation of peptide antigens from cytosol to endoplasmic reticulum (ER) for loading onto MHC class I (MHCI) molecules. Uses the chemical energy of ATP to export peptides against the concentration gradient. During the transport cycle alternates between 'inward-facing' state with peptide binding site facing the cytosol to 'outward-facing' state with peptide binding site facing the ER lumen. Peptide antigen binding to ATP-loaded TAP1-TAP2 induces a switch to hydrolysis-competent 'outward-facing' conformation ready for peptide loading onto nascent MHCI molecules. Subsequently ATP hydrolysis resets the transporter to the 'inward facing' state for a new cycle. As a component of the peptide loading complex (PLC), acts as a molecular scaffold essential for peptide-MHCI assembly and antigen presentation. The polypeptide is Antigen peptide transporter 1 (TAP1) (Gorilla gorilla gorilla (Western lowland gorilla)).